Reading from the N-terminus, the 991-residue chain is Polyribonucleotide nucleotidyltransferase 2, mitochondrial (991 aa).

Residues Met-1 to Pro-39 constitute a mitochondrion transit peptide. Residues Pro-609 to Val-667 form the KH domain. The S1 motif 1 domain maps to Gly-678–Lys-746. Positions Glu-813 to Ala-865 are disordered. Over residues Asp-822–Pro-838 the composition is skewed to basic and acidic residues. Residues Gly-925 to Glu-987 enclose the S1 motif 2 domain.

The protein belongs to the polyribonucleotide nucleotidyltransferase family.

The protein localises to the mitochondrion. It catalyses the reaction RNA(n+1) + phosphate = RNA(n) + a ribonucleoside 5'-diphosphate. In terms of biological role, involved in the 3'-end maturation of mitochondrial mRNAs, rRNAs and tRNAs. Functions as a poly(A) mRNA 3'-5' degrading phosphorylase and is required for the degradation of highly expressed transcripts of non-coding regions. The chain is Polyribonucleotide nucleotidyltransferase 2, mitochondrial (PNP2) from Arabidopsis thaliana (Mouse-ear cress).